Here is a 435-residue protein sequence, read N- to C-terminus: MTTFSPREIVSELDRYIIGQNDAKRAVAIALRNRWRRQQLDESLRDEVMPKNILMIGPTGVGKTEISRRLAKLAGAPFIKVEATKFTEVGYVGRDVEQIIRDLVEIGIGLIKEKKRLEVEAKAHAGAEERVLDALVGATASPATRDSFRKKLRAGELDDKEIDIEVAETSSGMPGFEIPGMPGANVGILNLSDMFGKAMGGRTKKVRTTVKTSYADLIRDESDKLIDNEVIQREAVKSVENDGIVFLDEIDKIANREGAMGAGVSREGVQRDLLPLVEGTTVATKYGPVKTDHILFIASGAFHVSKPSDLLPELQGRLPIRVELKALTKEDFRRILTETEASLIRQYIALMATEQLDLEFTEDAIDALADVAVNLNSSIENIGARRLQTVMERVLYDISFNAPDRGGAKVMIDSAYVREHVGEIAADADLSRYIL.

ATP contacts are provided by residues isoleucine 18, 60-65 (GVGKTE), aspartate 248, glutamate 313, and arginine 385.

It belongs to the ClpX chaperone family. HslU subfamily. In terms of assembly, a double ring-shaped homohexamer of HslV is capped on each side by a ring-shaped HslU homohexamer. The assembly of the HslU/HslV complex is dependent on binding of ATP.

The protein localises to the cytoplasm. Its function is as follows. ATPase subunit of a proteasome-like degradation complex; this subunit has chaperone activity. The binding of ATP and its subsequent hydrolysis by HslU are essential for unfolding of protein substrates subsequently hydrolyzed by HslV. HslU recognizes the N-terminal part of its protein substrates and unfolds these before they are guided to HslV for hydrolysis. The chain is ATP-dependent protease ATPase subunit HslU from Allorhizobium ampelinum (strain ATCC BAA-846 / DSM 112012 / S4) (Agrobacterium vitis (strain S4)).